Reading from the N-terminus, the 1094-residue chain is Transport and Golgi organization protein 6 homolog (1094 aa).

The helical transmembrane segment at 468–488 (LTVLMDSLLPVLGVLFLLYCF) threads the bilayer. Serine 556 bears the Phosphoserine mark. Residues 777 to 795 (EEQQQTSHERPTDVAHSHL) show a composition bias toward basic and acidic residues. A disordered region spans residues 777-834 (EEQQQTSHERPTDVAHSHLEQQQSHETAPQTGLQSNAPIIPQGVNEPSTTTSQKSGSV). 2 stretches are compositionally biased toward polar residues: residues 796–813 (EQQQ…QSNA) and 821–834 (NEPS…SGSV). HEAT repeat units lie at residues 873–909 (LEMQ…SDVY) and 952–988 (SKYR…CQRL).

This sequence belongs to the Tango6 family.

The protein localises to the membrane. This Homo sapiens (Human) protein is Transport and Golgi organization protein 6 homolog (TANGO6).